Consider the following 219-residue polypeptide: Small ribosomal subunit protein uS5 (219 aa).

The disordered stretch occupies residues 1-32 (MSHPQSRPGGRDGRPRRRREPREEAPWVPKTA). The S5 DRBM domain occupies 68–131 (LKTEVVDVGI…NQALLNVGPI (64 aa)).

This sequence belongs to the universal ribosomal protein uS5 family. As to quaternary structure, part of the 30S ribosomal subunit. Contacts protein S4.

With S4 and S12 plays an important role in translational accuracy. The polypeptide is Small ribosomal subunit protein uS5 (rps5) (Cenarchaeum symbiosum (strain A)).